Consider the following 491-residue polypeptide: DEAD-box ATP-dependent RNA helicase 36 (491 aa).

Over residues 1–10 the composition is skewed to acidic residues; that stretch reads MEEPTPEEEG. A disordered region spans residues 1–56; sequence MEEPTPEEEGGITIMSKSRKNPKTVVNIQSQKLDSDQNTPQFEKFTNPNPSSDTTS. The segment covering 24–56 has biased composition (polar residues); it reads TVVNIQSQKLDSDQNTPQFEKFTNPNPSSDTTS. The Q motif motif lies at 58 to 86; the sequence is TNFEGLGLAEWAVETCKELGMRKPTPVQT. The 174-residue stretch at 89-262 folds into the Helicase ATP-binding domain; sequence VPKILAGRDV…EHSSNKAYFY (174 aa). 102-109 provides a ligand contact to ATP; that stretch reads AQTGSGKT. The DEAD box signature appears at 210-213; it reads DEAD. The region spanning 289 to 438 is the Helicase C-terminal domain; sequence YLVHILSQME…NKKVITDSLE (150 aa). Positions 471 to 491 are disordered; sequence KTLADKGLLKKRGKRQKSTEN. A compositionally biased stretch (basic residues) spans 479–491; it reads LKKRGKRQKSTEN.

It belongs to the DEAD box helicase family. DDX49/DBP8 subfamily.

It carries out the reaction ATP + H2O = ADP + phosphate + H(+). This chain is DEAD-box ATP-dependent RNA helicase 36 (RH36), found in Arabidopsis thaliana (Mouse-ear cress).